The chain runs to 566 residues: Membrane protein insertase YidC (566 aa).

5 consecutive transmembrane segments (helical) span residues isoleucine 3–tryptophan 23, glycine 346–valine 366, tryptophan 369–alanine 389, glycine 436–isoleucine 456, and methionine 509–leucine 529.

It belongs to the OXA1/ALB3/YidC family. Type 1 subfamily. Interacts with the Sec translocase complex via SecD. Specifically interacts with transmembrane segments of nascent integral membrane proteins during membrane integration.

It localises to the cell inner membrane. Required for the insertion and/or proper folding and/or complex formation of integral membrane proteins into the membrane. Involved in integration of membrane proteins that insert both dependently and independently of the Sec translocase complex, as well as at least some lipoproteins. Aids folding of multispanning membrane proteins. This is Membrane protein insertase YidC from Coxiella burnetii (strain CbuK_Q154) (Coxiella burnetii (strain Q154)).